A 149-amino-acid polypeptide reads, in one-letter code: Glutamyl-tRNA(Gln) amidotransferase subunit C, mitochondrial (149 aa).

A mitochondrion-targeting transit peptide spans 1 to 25 (MNHLHRLFRITQVDRPVLLAITRRL).

It belongs to the GatC family. Subunit of the heterotrimeric GatCAB amidotransferase (AdT) complex, composed of A, B and C subunits.

Its subcellular location is the mitochondrion. It catalyses the reaction L-glutamyl-tRNA(Gln) + L-glutamine + ATP + H2O = L-glutaminyl-tRNA(Gln) + L-glutamate + ADP + phosphate + H(+). Its function is as follows. Allows the formation of correctly charged Gln-tRNA(Gln) through the transamidation of misacylated Glu-tRNA(Gln) in the mitochondria. The reaction takes place in the presence of glutamine and ATP through an activated gamma-phospho-Glu-tRNA(Gln). The protein is Glutamyl-tRNA(Gln) amidotransferase subunit C, mitochondrial of Branchiostoma floridae (Florida lancelet).